The chain runs to 315 residues: Gamma-hemolysin component C (315 aa).

The first 29 residues, Met1 to Ala29, serve as a signal peptide directing secretion.

It belongs to the aerolysin family. As to quaternary structure, toxicity requires sequential binding and synergistic association of a class S and a class F component which form heterooligomeric complexes. HlgC (class S) associates with HlgB (class F) thus forming an CB toxin.

Functionally, toxin that seems to act by forming pores in the membrane of the cell. Has a hemolytic and a leucotoxic activity. This Staphylococcus aureus (strain MSSA476) protein is Gamma-hemolysin component C (hlgC).